A 969-amino-acid chain; its full sequence is Squamosa promoter-binding-like protein 6 (969 aa).

Disordered stretches follow at residues 1–25 (MEAA…DMDR) and 54–81 (EASG…VNAR). Positions 55–74 (ASGLALNSSPSSSEEAGAAS) are enriched in low complexity. The SBP-type zinc-finger motif lies at 149–226 (GPACQVEGCT…AGHNRRRRKT (78 aa)). Cys152, Cys157, Cys174, His177, Cys193, Cys196, His200, and Cys212 together coordinate Zn(2+). The Bipartite nuclear localization signal motif lies at 209–225 (KRSCRRRLAGHNRRRRK). Positions 377 to 434 (GMEGFEDGYEGSPTPAFKTTDSPNCPSWMHQDSTQSPPQTSGNSDSTSAQSLSSSNGD) are disordered. Positions 393-419 (FKTTDSPNCPSWMHQDSTQSPPQTSGN) are enriched in polar residues. Over residues 420-431 (SDSTSAQSLSSS) the composition is skewed to low complexity.

In terms of tissue distribution, ubiquitous.

It is found in the nucleus. In terms of biological role, trans-acting factor that binds specifically to the consensus nucleotide sequence 5'-TNCGTACAA-3'. The sequence is that of Squamosa promoter-binding-like protein 6 (SPL6) from Oryza sativa subsp. japonica (Rice).